The following is a 523-amino-acid chain: Bifunctional purine biosynthesis protein PurH (523 aa).

The 154-residue stretch at 1 to 154 folds into the MGS-like domain; it reads MTATAGSNKR…KNHPSVAVVT (154 aa).

The protein belongs to the PurH family.

It catalyses the reaction (6R)-10-formyltetrahydrofolate + 5-amino-1-(5-phospho-beta-D-ribosyl)imidazole-4-carboxamide = 5-formamido-1-(5-phospho-D-ribosyl)imidazole-4-carboxamide + (6S)-5,6,7,8-tetrahydrofolate. It carries out the reaction IMP + H2O = 5-formamido-1-(5-phospho-D-ribosyl)imidazole-4-carboxamide. It participates in purine metabolism; IMP biosynthesis via de novo pathway; 5-formamido-1-(5-phospho-D-ribosyl)imidazole-4-carboxamide from 5-amino-1-(5-phospho-D-ribosyl)imidazole-4-carboxamide (10-formyl THF route): step 1/1. It functions in the pathway purine metabolism; IMP biosynthesis via de novo pathway; IMP from 5-formamido-1-(5-phospho-D-ribosyl)imidazole-4-carboxamide: step 1/1. The protein is Bifunctional purine biosynthesis protein PurH of Streptomyces coelicolor (strain ATCC BAA-471 / A3(2) / M145).